The sequence spans 320 residues: Cytochrome f (320 aa).

Residues 1 to 35 form the signal peptide; the sequence is MQNRKTFSWVKEQMTRSIYVSIMIYVITRASISNA. Residues tyrosine 36, cysteine 56, cysteine 59, and histidine 60 each contribute to the heme site. Residues 286–306 traverse the membrane as a helical segment; the sequence is VQGLLFFLASVILAQIFLVLK.

This sequence belongs to the cytochrome f family. As to quaternary structure, the 4 large subunits of the cytochrome b6-f complex are cytochrome b6, subunit IV (17 kDa polypeptide, petD), cytochrome f and the Rieske protein, while the 4 small subunits are PetG, PetL, PetM and PetN. The complex functions as a dimer. The cofactor is heme.

It is found in the plastid. It localises to the chloroplast thylakoid membrane. Component of the cytochrome b6-f complex, which mediates electron transfer between photosystem II (PSII) and photosystem I (PSI), cyclic electron flow around PSI, and state transitions. In Phalaenopsis aphrodite subsp. formosana (Moth orchid), this protein is Cytochrome f.